Reading from the N-terminus, the 471-residue chain is Heat shock 70 kDa protein 13 (471 aa).

A signal peptide spans 1 to 22; sequence MAGEMTILGSAVLTLLLAGYLA. Over residues 317-330 the composition is skewed to basic and acidic residues; the sequence is DSKEPQNGDSELPK. Positions 317–350 are disordered; that stretch reads DSKEPQNGDSELPKDQLTPGDGHHVNRVFRPGLS.

This sequence belongs to the heat shock protein 70 family. Binds UBQLN2.

It is found in the microsome. It localises to the endoplasmic reticulum. Its function is as follows. Has peptide-independent ATPase activity. The chain is Heat shock 70 kDa protein 13 (Hspa13) from Mus musculus (Mouse).